Here is a 684-residue protein sequence, read N- to C-terminus: MNKSEAEAKIRALRREINEHNYNYYNLAKPKISDYDFDALLRTLAELEAKYPDLVTPDSPSQRVGGEVTKNFPIVRHKTRMLSLSNTYNLGELGDFLARVAKSLESEGVQAYDFTAELKYDGVAVSLIYRDGLLVQGATRGDGSQGDEITANLKTVRTIPLRLRAPASGSAFDTEKWNGSGDIEVRGEVFMTKADFEKINAERDESEQFANPRNATAGTLKQQDSREVAKRRLTMVAYYLDGRPFADLSHGERLEKLAELGFYTGEAHRTCRSLQDIQAFLDEWENKRDALAYEIDGAVIKLNNVRYQELLGATSKSPRWAIAYKYAARRAETVLENVVFQVGRTGAITPVAELQPVKLSGSVISRSTLHNLDEIRRLDLHIGDRVIIEKSGDVIPKVVGVVAEKRPPEARTIEPLSTCPSCGTPLEHPENEVIYYCPNEFGCPAQRKARLVHFASRHAMDIEGLGEAVVEQLLGAGLIGDPGDLYFIEKTALLALERFAEKSAQNLLNGIEASKSRSFERLIFALGIRYVGRRTASILADRFTSLDTIKSASQAELCETEEIGETIAKSVALFFTKPQVQELLGKLERAGLRLASDKKSPDAPQTFAGMTVVFTGSLENFTRDDAAAKVGERGGKVTSTVSKKTSLVVAGKEAGGKLAKAEKLGVKIVTEAEFQTMLAAESGD.

Residues 34–38 (DYDFD), 83–84 (SL), and Glu117 each bind NAD(+). Lys119 acts as the N6-AMP-lysine intermediate in catalysis. NAD(+) is bound by residues Arg140, Glu188, Lys301, and Lys325. Cys419, Cys422, Cys437, and Cys443 together coordinate Zn(2+). The region spanning 602 to 684 (DAPQTFAGMT…QTMLAAESGD (83 aa)) is the BRCT domain.

The protein belongs to the NAD-dependent DNA ligase family. LigA subfamily. Mg(2+) serves as cofactor. Requires Mn(2+) as cofactor.

It carries out the reaction NAD(+) + (deoxyribonucleotide)n-3'-hydroxyl + 5'-phospho-(deoxyribonucleotide)m = (deoxyribonucleotide)n+m + AMP + beta-nicotinamide D-nucleotide.. DNA ligase that catalyzes the formation of phosphodiester linkages between 5'-phosphoryl and 3'-hydroxyl groups in double-stranded DNA using NAD as a coenzyme and as the energy source for the reaction. It is essential for DNA replication and repair of damaged DNA. In Chloroherpeton thalassium (strain ATCC 35110 / GB-78), this protein is DNA ligase.